The primary structure comprises 269 residues: MSRFDTLFANLKAKNEGAFVPFVTLCDPDFDRSFEIIETLIANGADALELGFPFSDPLLDGSVIQAANKRALDGGYSTDACFEMIAKIRSKYPEIPIGLLLCANLVFVPTQCVFFNRCAESGVDAVLIADVPVLASEEFTQAAKKHGIQSVFICPPNADQVTIERIANLTEGYTYLVSRSGVTSAENQAHAKNLDNLIESLKRSNSAPILQGFGIAKPAQVKEALALGCDGAISGSAIVKIIERNLDSQTQLLSELAKFVSVMKAATKS.

Residues Glu49 and Asp60 each act as proton acceptor in the active site.

The protein belongs to the TrpA family. In terms of assembly, tetramer of two alpha and two beta chains.

It carries out the reaction (1S,2R)-1-C-(indol-3-yl)glycerol 3-phosphate + L-serine = D-glyceraldehyde 3-phosphate + L-tryptophan + H2O. Its pathway is amino-acid biosynthesis; L-tryptophan biosynthesis; L-tryptophan from chorismate: step 5/5. The alpha subunit is responsible for the aldol cleavage of indoleglycerol phosphate to indole and glyceraldehyde 3-phosphate. The polypeptide is Tryptophan synthase alpha chain (Actinobacillus pleuropneumoniae serotype 7 (strain AP76)).